A 342-amino-acid chain; its full sequence is Tetraacyldisaccharide 4'-kinase (342 aa).

68–75 is a binding site for ATP; it reads TVGGTGKT.

This sequence belongs to the LpxK family.

The enzyme catalyses a lipid A disaccharide + ATP = a lipid IVA + ADP + H(+). It functions in the pathway glycolipid biosynthesis; lipid IV(A) biosynthesis; lipid IV(A) from (3R)-3-hydroxytetradecanoyl-[acyl-carrier-protein] and UDP-N-acetyl-alpha-D-glucosamine: step 6/6. Functionally, transfers the gamma-phosphate of ATP to the 4'-position of a tetraacyldisaccharide 1-phosphate intermediate (termed DS-1-P) to form tetraacyldisaccharide 1,4'-bis-phosphate (lipid IVA). The polypeptide is Tetraacyldisaccharide 4'-kinase (Burkholderia cenocepacia (strain HI2424)).